A 495-amino-acid polypeptide reads, in one-letter code: Trimethylamine methyltransferase MttB (495 aa).

Pyl334 is a non-standard amino acid (pyrrolysine).

This sequence belongs to the trimethylamine methyltransferase family. As to quaternary structure, can form a complex with MttC.

It catalyses the reaction Co(I)-[trimethylamine-specific corrinoid protein] + trimethylamine + H(+) = methyl-Co(III)-[trimethylamine-specific corrinoid protein] + dimethylamine. The protein operates within one-carbon metabolism; methanogenesis from trimethylamine. Catalyzes the transfer of a methyl group from trimethylamine to the corrinoid cofactor of MttC. This is Trimethylamine methyltransferase MttB from Methanosarcina barkeri.